Consider the following 200-residue polypeptide: Guanylate kinase (200 aa).

The Guanylate kinase-like domain maps to 4 to 183 (GAVLIISGPS…AKEAMVAIAR (180 aa)). An ATP-binding site is contributed by 11–18 (GPSGCGKS).

The protein belongs to the guanylate kinase family.

The protein resides in the cytoplasm. The catalysed reaction is GMP + ATP = GDP + ADP. Its function is as follows. Essential for recycling GMP and indirectly, cGMP. The protein is Guanylate kinase of Helicobacter hepaticus (strain ATCC 51449 / 3B1).